The sequence spans 359 residues: MVQACEGRSRAQLPTLSLGADMTQPPPAKAPAKKHVRLQERRGSSVALMLDVRSLGTVEPICSVNTPREVTLHFLRTAGHPLTRWTLQHQPPSPKQLEEEFLKIPSNFVNPEDLDIPGHASKDRYKTILPNPQSRVCLGRAHSQEDSDYINANYIRGYDGKEKVYIATQGPMPNTVADFWEMVWQEDVSLIVMLTQLREGKEKCVHYWPTEEEAYGPFQIRIQGMKEHPEYTVRHLTIQHQQECRSVKHILFSAWPDHQTPESAGPLLRLVAEVETPETAANSGPIVVHCSAGIGRTGCFIATRIGCQQLKARGEVDILGIVCQLRLDRGGMIQTAEQYQFLHHTLALYAAQLPPETDP.

The interval 1-34 is disordered; the sequence is MVQACEGRSRAQLPTLSLGADMTQPPPAKAPAKK. Residues 38–51 are interaction with MAP kinases; sequence LQERRGSSVALMLD. At S44 the chain carries Phosphoserine. T66 carries the phosphothreonine modification. 2 positions are modified to phosphoserine: S93 and S143. The Tyrosine-protein phosphatase domain occupies 97-349; sequence LEEEFLKIPS…QFLHHTLALY (253 aa). Substrate-binding positions include D257, 290–296, and Q334; that span reads CSAGIGR. C290 serves as the catalytic Phosphocysteine intermediate. C290 carries the cysteine sulfenic acid (-SOH) modification.

The protein belongs to the protein-tyrosine phosphatase family. Non-receptor class subfamily. In terms of processing, oxidized at active site cysteine. Treatment with pervanadate (vanadate and H(2)O(2)) or with antigen enhanced oxidation of active site cysteine.

It is found in the cytoplasm. The protein localises to the cytoskeleton. The enzyme catalyses O-phospho-L-tyrosyl-[protein] + H2O = L-tyrosyl-[protein] + phosphate. Inhibited in cells after FCER1A triggering. Functionally, may play a role in the regulation of T and B-lymphocyte development and signal transduction. The sequence is that of Tyrosine-protein phosphatase non-receptor type 7 (Ptpn7) from Rattus norvegicus (Rat).